The sequence spans 943 residues: Isoleucine--tRNA ligase (943 aa).

A 'HIGH' region motif is present at residues 59-69 (PYANGQIHLGH). Glu-577 is a binding site for L-isoleucyl-5'-AMP. A 'KMSKS' region motif is present at residues 618 to 622 (KMSKS). ATP is bound at residue Lys-621. Residues Cys-906, Cys-909, Cys-926, and Cys-929 each contribute to the Zn(2+) site.

It belongs to the class-I aminoacyl-tRNA synthetase family. IleS type 1 subfamily. Monomer. It depends on Zn(2+) as a cofactor.

It localises to the cytoplasm. The enzyme catalyses tRNA(Ile) + L-isoleucine + ATP = L-isoleucyl-tRNA(Ile) + AMP + diphosphate. In terms of biological role, catalyzes the attachment of isoleucine to tRNA(Ile). As IleRS can inadvertently accommodate and process structurally similar amino acids such as valine, to avoid such errors it has two additional distinct tRNA(Ile)-dependent editing activities. One activity is designated as 'pretransfer' editing and involves the hydrolysis of activated Val-AMP. The other activity is designated 'posttransfer' editing and involves deacylation of mischarged Val-tRNA(Ile). The polypeptide is Isoleucine--tRNA ligase (Xylella fastidiosa (strain M23)).